The sequence spans 1274 residues: MAQTNGELEHSKGMSSPAVRISQAQKSTKLTVDPESPEQVANGTHAEGEQPEENAGGLFQISVKLPHEPYKIQVMVSSQEQVQDVRQSIVELPSTFQYTCFHLEFNGKRINDFVELSEVPDLKADSEIVLVEDPYTEKEARMHVVRMRELVGAAGDRVDNIQGVNAGLSLHDAIAAEAAAGEASEKEHSLSKYEIAGSSSLKTILPRPETPLPKTVKSIALSPWNPAPYHLRQKGHLLYLQVTTNEGEQFQITSHVSGFYVNKCSNAKFDPFPKTIPKKRSAHSLLTLISQLSPSFNSSFEALQEANNQKDLLTTFPFQNAIPNNPWLVPAPSSNVNAHQPDITRSQENYLISGVDNAETLRDWNEEFQTTRELPRETVQDRVFRERLTSKLFADYNEAAARGAVLVARGEVAPLNPTEERDAQIFVYNNIFYSFGADGVGTFASEGGDEAARVAVGKDVLGIKAVNQLDINGLFTPGTIVVDYLGKRIVGQSIVPGIFKQREPGENQIDYGGVEGKDVVATHPDFVPVFEKLSKALRIKKHPVWDKEGKRHDLEGSVETKGLLGTDGRKYVLDLYRVTPLDVMWQEEEGSDVYPHRMSILRLELVESYWRHKMSQYVKAEVERRRVAKEAAKKEQSETAEPKEEGAEEKSEEALDQERVDISGFSLALNPDVCSGQVPQTAEEKEQWAQDEKEVRDTCDFLRSKVMPELVQDLHDGDVGFPMDGQSLSQLLHKRGINIRYLGKLAQMSKEKGARLDALTTLLVQEMIARAFKHIANNYLRNVPAPFVASCLAHLLNCLLGADVNANPRAEIDSSLREVYPEGDFSFEKATPASLRADIEKQVTIRYRFSLDAEWYNSLRHLQLLRDIAIKLGIQLGARDFVFAKADLPKTPVSNGVNGAGHDDSNSNKKKKKKGGDSNSPARAAVEDKPALSIVVDDIVNVVPLVKDASPRSSLAEEALEAGRISLMQNQKQLGQELILESLSLHEQIYGILHPEVAKLYHQLSMLYYQTDEKEAAVELARKAVIVTERTLGVDSADTILSYLNLSLFEHASGNTKTALVYIKHAMDLWKIIYGPNHPDSITTMNNAAVMLQHLKQYSDSRKWFEASLVVCESLFGRQSINTATILFQLAQALALDQDSKGAVGKMRDAYNIFLQQLGPNDRNTKEAETWLEQLTQNAVSIAKHAKDIQARRLRRINMTPRTLGTRVQPQVGQTAPESAGAKDASNTSLDSRSIDELLKFIEGGDTTSASRSKQKKRAAASNPKLRGSKKSSA.

The disordered stretch occupies residues 1–53 (MAQTNGELEHSKGMSSPAVRISQAQKSTKLTVDPESPEQVANGTHAEGEQPEE). TPR repeat units follow at residues 293–326 (SPSF…PNNP), 510–543 (DYGG…KKHP), and 628–661 (AKEA…ERVD). The region spanning 342-586 (DITRSQENYL…RVTPLDVMWQ (245 aa)) is the Clu domain. Disordered stretches follow at residues 631-655 (AAKK…EEAL) and 893-925 (VSNG…ARAA). TPR repeat units follow at residues 998-1031 (AKLY…TERT), 1040-1073 (ILSY…WKII), 1082-1115 (ITTM…CESL), and 1124-1157 (ATIL…FLQQ). Residues 1197–1274 (INMTPRTLGT…KLRGSKKSSA (78 aa)) form a disordered region. Polar residues predominate over residues 1200–1217 (TPRTLGTRVQPQVGQTAP).

It belongs to the CLU family. As to quaternary structure, may associate with the eukaryotic translation initiation factor 3 (eIF-3) complex.

The protein localises to the cytoplasm. MRNA-binding protein involved in proper cytoplasmic distribution of mitochondria. The polypeptide is Clustered mitochondria protein homolog (Aspergillus terreus (strain NIH 2624 / FGSC A1156)).